The primary structure comprises 326 residues: Putative ubiquitin-conjugating enzyme E2 38 (326 aa).

Residues 54–214 (NWVKKVQDEW…VFLLSLKTMV (161 aa)) enclose the UBC core domain. C140 functions as the Glycyl thioester intermediate in the catalytic mechanism. A disordered region spans residues 297 to 326 (LAEKPKPPVNNANTENQSKKKTRKRSRSSR). Basic residues predominate over residues 315 to 326 (KKKTRKRSRSSR).

This sequence belongs to the ubiquitin-conjugating enzyme family.

The enzyme catalyses S-ubiquitinyl-[E1 ubiquitin-activating enzyme]-L-cysteine + [E2 ubiquitin-conjugating enzyme]-L-cysteine = [E1 ubiquitin-activating enzyme]-L-cysteine + S-ubiquitinyl-[E2 ubiquitin-conjugating enzyme]-L-cysteine.. The protein operates within protein modification; protein ubiquitination. Its function is as follows. Accepts the ubiquitin from the E1 complex and catalyzes its covalent attachment to other proteins. The chain is Putative ubiquitin-conjugating enzyme E2 38 (UBC38) from Arabidopsis thaliana (Mouse-ear cress).